Reading from the N-terminus, the 176-residue chain is Photosystem I assembly protein Ycf4 (176 aa).

The next 2 helical transmembrane spans lie at 22–42 (FLWA…GTAS) and 57–77 (VMTF…SMLF).

Belongs to the Ycf4 family.

It localises to the plastid thylakoid membrane. Its function is as follows. Seems to be required for the assembly of the photosystem I complex. This is Photosystem I assembly protein Ycf4 from Cuscuta obtusiflora (Peruvian dodder).